The sequence spans 166 residues: Seed allergenic protein RAG2 (166 aa).

Residues 1-26 (MASNKVVFSALLLIIVSVLAATATMA) form the signal peptide. 5 cysteine pairs are disulfide-bonded: Cys-41-Cys-93, Cys-55-Cys-81, Cys-63-Cys-125, Cys-82-Cys-141, and Cys-95-Cys-153. A glycan (N-linked (GlcNAc...) asparagine) is linked at Asn-147.

The protein belongs to the cereal trypsin/alpha-amylase inhibitor family. In terms of processing, five disulfide bonds are present.

It localises to the secreted. Its function is as follows. Seed storage protein. The protein is Seed allergenic protein RAG2 (RAG2) of Oryza sativa subsp. japonica (Rice).